The chain runs to 140 residues: Nucleoside diphosphate kinase (140 aa).

ATP is bound by residues K11, F59, R87, T93, R104, and N114. Residue H117 is the Pros-phosphohistidine intermediate of the active site.

This sequence belongs to the NDK family. As to quaternary structure, homotetramer. Mg(2+) is required as a cofactor.

The protein localises to the cytoplasm. The enzyme catalyses a 2'-deoxyribonucleoside 5'-diphosphate + ATP = a 2'-deoxyribonucleoside 5'-triphosphate + ADP. The catalysed reaction is a ribonucleoside 5'-diphosphate + ATP = a ribonucleoside 5'-triphosphate + ADP. Major role in the synthesis of nucleoside triphosphates other than ATP. The ATP gamma phosphate is transferred to the NDP beta phosphate via a ping-pong mechanism, using a phosphorylated active-site intermediate. This chain is Nucleoside diphosphate kinase, found in Rhizobium rhizogenes (strain K84 / ATCC BAA-868) (Agrobacterium radiobacter).